A 78-amino-acid chain; its full sequence is UPF0154 protein SSU98_1719 (78 aa).

A helical transmembrane segment spans residues 3–23 (LGLAILLIVLAFAGGVALGIY).

Belongs to the UPF0154 family.

It is found in the cell membrane. This chain is UPF0154 protein SSU98_1719, found in Streptococcus suis (strain 98HAH33).